The chain runs to 309 residues: Thiamine-monophosphate kinase (309 aa).

Mg(2+) is bound by residues aspartate 41 and aspartate 55. Histidine 62 lines the substrate pocket. Residues aspartate 83, aspartate 128, and aspartate 215 each contribute to the Mg(2+) site. Position 127 to 128 (127 to 128) interacts with ATP; the sequence is GD. Serine 217 contributes to the ATP binding site. Mg(2+) is bound at residue aspartate 218. Glutamate 268 contacts substrate.

Belongs to the thiamine-monophosphate kinase family.

It catalyses the reaction thiamine phosphate + ATP = thiamine diphosphate + ADP. The protein operates within cofactor biosynthesis; thiamine diphosphate biosynthesis; thiamine diphosphate from thiamine phosphate: step 1/1. Catalyzes the ATP-dependent phosphorylation of thiamine-monophosphate (TMP) to form thiamine-pyrophosphate (TPP), the active form of vitamin B1. The sequence is that of Thiamine-monophosphate kinase from Methanopyrus kandleri (strain AV19 / DSM 6324 / JCM 9639 / NBRC 100938).